A 413-amino-acid chain; its full sequence is Alpha-1-antitrypsin 1-1 (413 aa).

The N-terminal stretch at 1-24 (MTPSISWGLLLLAGLCCLVPSFLA) is a signal peptide. Residues N64, N101, and N265 are each glycosylated (N-linked (GlcNAc...) asparagine). Residues 368 to 387 (AVTVLQMVPMSMPPILRFDH) are RCL.

This sequence belongs to the serpin family.

Its subcellular location is the secreted. In terms of biological role, inhibitor of serine proteases. Its primary target is elastase, but it also has a moderate affinity for plasmin and thrombin. This Mus musculus (Mouse) protein is Alpha-1-antitrypsin 1-1 (Serpina1a).